We begin with the raw amino-acid sequence, 275 residues long: Lectin (275 aa).

The signal sequence occupies residues 1-30 (MASLQTQMISFYLIFLSILLTTIFFFKVNS). D-glucose is bound by residues D111 and G129. Mn(2+)-binding residues include E149 and D151. Ca(2+)-binding residues include D151, F153, N155, and D159. Mn(2+) is bound by residues D159 and H166. A propeptide spanning residues 211–217 (NSLEEEN) is cleaved from the precursor. D-glucose is bound by residues G246 and A247. A propeptide spanning residues 270 to 275 (KQAADA) is cleaved from the precursor.

The protein belongs to the leguminous lectin family. As to quaternary structure, heterotetramer of two alpha and two beta chains. Post-translationally, the mature form consists of two chains, alpha and beta, produced by cleavage of the immature protein. These remain cleaved, yet fold together to form one subunit.

D-mannose specific lectin. The polypeptide is Lectin (Lens culinaris subsp. tomentosus (Lentil)).